The primary structure comprises 61 residues: Small ribosomal subunit protein uS14 (61 aa).

Cys24, Cys27, Cys40, and Cys43 together coordinate Zn(2+).

It belongs to the universal ribosomal protein uS14 family. Zinc-binding uS14 subfamily. As to quaternary structure, part of the 30S ribosomal subunit. Contacts proteins S3 and S10. It depends on Zn(2+) as a cofactor.

Its function is as follows. Binds 16S rRNA, required for the assembly of 30S particles and may also be responsible for determining the conformation of the 16S rRNA at the A site. The chain is Small ribosomal subunit protein uS14 from Clostridium kluyveri (strain NBRC 12016).